A 148-amino-acid polypeptide reads, in one-letter code: Single-stranded DNA-binding protein 2 (148 aa).

Positions 4 to 109 (INSVIIAGNL…IKARRIQFLN (106 aa)) constitute an SSB domain.

As to quaternary structure, homotetramer.

In Chlorobaculum tepidum (strain ATCC 49652 / DSM 12025 / NBRC 103806 / TLS) (Chlorobium tepidum), this protein is Single-stranded DNA-binding protein 2 (ssb2).